The chain runs to 1940 residues: Cilia- and flagella-associated protein 74 (1940 aa).

The tract at residues 52 to 90 (GSPAVTLRRAKAAAAANGTSSPGIRGSPSPARGPGGRLP) is disordered. Low complexity predominate over residues 63–90 (AAAAANGTSSPGIRGSPSPARGPGGRLP). Positions 100-159 (ANVEQLKRRLQTVVAEVEGHQQRYDKVLLEANKATDLVHSMEAEIESLYVEAEELARRVP) form a coiled coil. 5 disordered regions span residues 512–548 (VAGL…QSLT), 1159–1336 (SPHV…AAAE), 1373–1418 (PQSQ…AAPP), 1714–1737 (AGDK…GASK), and 1894–1940 (PGSR…KKAV). Residues 535–548 (SLTQQLAATQQSLT) are compositionally biased toward low complexity. Residues 1205-1220 (DGGGGGAMANGNGSGG) show a composition bias toward gly residues. A compositionally biased stretch (acidic residues) spans 1227 to 1236 (DGEPEDGEGD). Residues 1260 to 1271 (GRGGRGGRGGAA) are compositionally biased toward gly residues. Residues 1272 to 1282 (GEDEDEDEDAG) show a composition bias toward acidic residues. Residues 1287–1304 (RGKSSSSSKASSGRRSSS) are compositionally biased toward low complexity. The span at 1321 to 1335 (VPDDDDADAEAEAAA) shows a compositional bias: acidic residues. Low complexity predominate over residues 1373 to 1414 (PQSQNPTPSQSQSGQAPAASAPSDGASGAAAAAETAASSGPA). Composition is skewed to pro residues over residues 1720 to 1731 (TPAPGIKPPATP) and 1896 to 1912 (SRPP…PAPE). Over residues 1913-1929 (PVAASGPGAGAAGVKKL) the composition is skewed to low complexity. Positions 1930-1940 (VPPPSPPKKAV) are enriched in pro residues.

It belongs to the CFAP74 family. As to quaternary structure, part of the PDCP1 complex composed of CFAP46, CFAP54, CFAP74 and CFAP221; the PDCP1 complex binds calmodulin.

Its subcellular location is the cytoplasm. It localises to the cytoskeleton. The protein resides in the cilium axoneme. Its function is as follows. As part of the central apparatus of the cilium axoneme may play a role in cilium movement and thereby cell motility. The chain is Cilia- and flagella-associated protein 74 from Chlamydomonas reinhardtii (Chlamydomonas smithii).